A 98-amino-acid polypeptide reads, in one-letter code: Small ribosomal subunit protein uS19 (98 aa).

The interval 74–98 (FAPTRNYRGHAGGKSEKGGSAPRKK) is disordered.

It belongs to the universal ribosomal protein uS19 family.

Functionally, protein S19 forms a complex with S13 that binds strongly to the 16S ribosomal RNA. The sequence is that of Small ribosomal subunit protein uS19 from Chlorobium chlorochromatii (strain CaD3).